The chain runs to 225 residues: uncharacterized protein (225 aa).

The PCI domain maps to 166–214; sequence LNSDVIKDKILAIIENVGEITYEELAEKINIPEEDLEKYLSELKESGDI.

This is an uncharacterized protein from Methanocaldococcus jannaschii (strain ATCC 43067 / DSM 2661 / JAL-1 / JCM 10045 / NBRC 100440) (Methanococcus jannaschii).